The sequence spans 418 residues: MANKLRNYTINFGPQHPAAHGVLRMILELDGEQIVRADPHIGLLHRGTEKLAETKTYLQALPYMDRLDYVSMMVNEQAYCLAVEKLAGIDVPIRAQYIRVMFAEVTRILNHLMGIGSHAFDIGAMTAILYAFRDREELMDLYEAVSGARMHAAYFRPGGVYRDLPDFMPKYESSKFRNAKVLKQLNESREGTMLDFIDAFCERFPKNIDTLETLLTDNRIWKQRTVGIGVVSPERAMQKGFTGVMLRGSGVEWDVRKTQPYEVYDKMDFDIPVGVNGDCYDRYLCRMEEMRQSVRIIKQCSEWLRVNPGPVITTNHKFAPPKRTEMKTGMEDLIHHFKLFTEGMHVPEGETYTAVEHPKGEFGVYIISDGANKPYRLKIRAPGFAHLQGMDEMAKGHMLADVVAIIGTQDIVFGEVDR.

It belongs to the complex I 49 kDa subunit family. NDH-1 is composed of 14 different subunits. Subunits NuoB, C, D, E, F, and G constitute the peripheral sector of the complex.

Its subcellular location is the cell inner membrane. It catalyses the reaction a quinone + NADH + 5 H(+)(in) = a quinol + NAD(+) + 4 H(+)(out). NDH-1 shuttles electrons from NADH, via FMN and iron-sulfur (Fe-S) centers, to quinones in the respiratory chain. The immediate electron acceptor for the enzyme in this species is believed to be ubiquinone. Couples the redox reaction to proton translocation (for every two electrons transferred, four hydrogen ions are translocated across the cytoplasmic membrane), and thus conserves the redox energy in a proton gradient. The chain is NADH-quinone oxidoreductase subunit D from Neisseria meningitidis serogroup A / serotype 4A (strain DSM 15465 / Z2491).